The primary structure comprises 480 residues: tRNA-2-methylthio-N(6)-dimethylallyladenosine synthase (480 aa).

The MTTase N-terminal domain maps to 3–120 (KKLYIKTWGC…LPEMLNQLQH (118 aa)). The [4Fe-4S] cluster site is built by C12, C49, C83, C157, C161, and C164. One can recognise a Radical SAM core domain in the interval 143-375 (KADGASAFVS…QEQITHQALR (233 aa)). The region spanning 378 to 441 (RQMLNTEQRV…ANSLRGELVR (64 aa)) is the TRAM domain.

The protein belongs to the methylthiotransferase family. MiaB subfamily. As to quaternary structure, monomer. [4Fe-4S] cluster serves as cofactor.

It localises to the cytoplasm. It carries out the reaction N(6)-dimethylallyladenosine(37) in tRNA + (sulfur carrier)-SH + AH2 + 2 S-adenosyl-L-methionine = 2-methylsulfanyl-N(6)-dimethylallyladenosine(37) in tRNA + (sulfur carrier)-H + 5'-deoxyadenosine + L-methionine + A + S-adenosyl-L-homocysteine + 2 H(+). Catalyzes the methylthiolation of N6-(dimethylallyl)adenosine (i(6)A), leading to the formation of 2-methylthio-N6-(dimethylallyl)adenosine (ms(2)i(6)A) at position 37 in tRNAs that read codons beginning with uridine. The polypeptide is tRNA-2-methylthio-N(6)-dimethylallyladenosine synthase (Colwellia psychrerythraea (strain 34H / ATCC BAA-681) (Vibrio psychroerythus)).